We begin with the raw amino-acid sequence, 158 residues long: 2-C-methyl-D-erythritol 2,4-cyclodiphosphate synthase (158 aa).

A divalent metal cation is bound by residues D9 and H11. 4-CDP-2-C-methyl-D-erythritol 2-phosphate is bound by residues 9–11 and 35–36; these read DVH and HS. Position 43 (H43) interacts with a divalent metal cation. 4-CDP-2-C-methyl-D-erythritol 2-phosphate is bound by residues 57–59, 62–66, 133–136, F140, and R143; these read DIG, FPDTD, and TTTE.

It belongs to the IspF family. As to quaternary structure, homotrimer. A divalent metal cation is required as a cofactor.

The enzyme catalyses 4-CDP-2-C-methyl-D-erythritol 2-phosphate = 2-C-methyl-D-erythritol 2,4-cyclic diphosphate + CMP. It participates in isoprenoid biosynthesis; isopentenyl diphosphate biosynthesis via DXP pathway; isopentenyl diphosphate from 1-deoxy-D-xylulose 5-phosphate: step 4/6. In terms of biological role, involved in the biosynthesis of isopentenyl diphosphate (IPP) and dimethylallyl diphosphate (DMAPP), two major building blocks of isoprenoid compounds. Catalyzes the conversion of 4-diphosphocytidyl-2-C-methyl-D-erythritol 2-phosphate (CDP-ME2P) to 2-C-methyl-D-erythritol 2,4-cyclodiphosphate (ME-CPP) with a corresponding release of cytidine 5-monophosphate (CMP). The polypeptide is 2-C-methyl-D-erythritol 2,4-cyclodiphosphate synthase (Actinobacillus pleuropneumoniae serotype 7 (strain AP76)).